The following is an 806-amino-acid chain: Leucine--tRNA ligase (806 aa).

The 'HIGH' region signature appears at Pro-38–His-48. Positions Lys-572–Ser-576 match the 'KMSKS' region motif. Residue Lys-575 participates in ATP binding.

It belongs to the class-I aminoacyl-tRNA synthetase family.

The protein localises to the cytoplasm. The catalysed reaction is tRNA(Leu) + L-leucine + ATP = L-leucyl-tRNA(Leu) + AMP + diphosphate. In Helicobacter pylori (strain J99 / ATCC 700824) (Campylobacter pylori J99), this protein is Leucine--tRNA ligase.